The sequence spans 94 residues: Non-specific lipid-transfer protein C4 (94 aa).

The N-terminal stretch at 1–26 is a signal peptide; the sequence is MAASKGNAAAAACALVLVLLAVGAEA. Disulfide bonds link cysteine 34/cysteine 72, cysteine 44/cysteine 59, cysteine 60/cysteine 85, and cysteine 70/cysteine 92. A glycan (N-linked (GlcNAc...) asparagine) is linked at asparagine 91.

Belongs to the plant LTP family.

Functionally, lipid-transfer protein that may be regulated by the transcription factor UDT1 in developing anthers and play a role in tapetum development. This Oryza sativa subsp. japonica (Rice) protein is Non-specific lipid-transfer protein C4.